The primary structure comprises 298 residues: Aspartate carbamoyltransferase catalytic subunit (298 aa).

Residues Arg53 and Thr54 each coordinate carbamoyl phosphate. An L-aspartate-binding site is contributed by Lys81. Residues Arg103, His132, and Gln135 each contribute to the carbamoyl phosphate site. L-aspartate contacts are provided by Arg166 and Arg218. Positions 259 and 260 each coordinate carbamoyl phosphate.

This sequence belongs to the aspartate/ornithine carbamoyltransferase superfamily. ATCase family. As to quaternary structure, heterododecamer (2C3:3R2) of six catalytic PyrB chains organized as two trimers (C3), and six regulatory PyrI chains organized as three dimers (R2).

The catalysed reaction is carbamoyl phosphate + L-aspartate = N-carbamoyl-L-aspartate + phosphate + H(+). It participates in pyrimidine metabolism; UMP biosynthesis via de novo pathway; (S)-dihydroorotate from bicarbonate: step 2/3. Functionally, catalyzes the condensation of carbamoyl phosphate and aspartate to form carbamoyl aspartate and inorganic phosphate, the committed step in the de novo pyrimidine nucleotide biosynthesis pathway. The protein is Aspartate carbamoyltransferase catalytic subunit of Anaplasma marginale (strain St. Maries).